A 122-amino-acid chain; its full sequence is Large ribosomal subunit protein uL14 (122 aa).

This sequence belongs to the universal ribosomal protein uL14 family. As to quaternary structure, part of the 50S ribosomal subunit. Forms a cluster with proteins L3 and L19. In the 70S ribosome, L14 and L19 interact and together make contacts with the 16S rRNA in bridges B5 and B8.

In terms of biological role, binds to 23S rRNA. Forms part of two intersubunit bridges in the 70S ribosome. In Lactobacillus helveticus (strain DPC 4571), this protein is Large ribosomal subunit protein uL14.